A 636-amino-acid polypeptide reads, in one-letter code: Translation factor GUF1, mitochondrial (636 aa).

Positions 35–218 (SNYRNFSIVA…AIIRDIPGPR (184 aa)) constitute a tr-type G domain. GTP-binding positions include 44 to 51 (AHVDHGKS), 111 to 115 (DTPGH), and 165 to 168 (NKID).

It belongs to the TRAFAC class translation factor GTPase superfamily. Classic translation factor GTPase family. LepA subfamily.

It localises to the mitochondrion inner membrane. It catalyses the reaction GTP + H2O = GDP + phosphate + H(+). Its function is as follows. Promotes mitochondrial protein synthesis. May act as a fidelity factor of the translation reaction, by catalyzing a one-codon backward translocation of tRNAs on improperly translocated ribosomes. Binds to mitochondrial ribosomes in a GTP-dependent manner. The sequence is that of Translation factor GUF1, mitochondrial from Debaryomyces hansenii (strain ATCC 36239 / CBS 767 / BCRC 21394 / JCM 1990 / NBRC 0083 / IGC 2968) (Yeast).